Reading from the N-terminus, the 336-residue chain is S-adenosylmethionine:tRNA ribosyltransferase-isomerase (336 aa).

Belongs to the QueA family. As to quaternary structure, monomer.

The protein localises to the cytoplasm. The enzyme catalyses 7-aminomethyl-7-carbaguanosine(34) in tRNA + S-adenosyl-L-methionine = epoxyqueuosine(34) in tRNA + adenine + L-methionine + 2 H(+). Its pathway is tRNA modification; tRNA-queuosine biosynthesis. Transfers and isomerizes the ribose moiety from AdoMet to the 7-aminomethyl group of 7-deazaguanine (preQ1-tRNA) to give epoxyqueuosine (oQ-tRNA). The protein is S-adenosylmethionine:tRNA ribosyltransferase-isomerase of Sulfurihydrogenibium sp. (strain YO3AOP1).